The sequence spans 209 residues: MGKFTVLNHPLIQHKLTIIRRKETGSNEFRRIVGEIAGLMTYEITRDLPLQDVEIETPMGKTVQKELAGKKLTIVPILRAGMGMVNGVLEMIPSAKVGVVGMYRDEETLKPVEYFFKVPKDVTERECLVVDPMLATGGSANLAIEALKKRGVTDIKLAVLVAAPEGVKAVQDEHPDVDIYAAALDDKLLPNGYIFPGLGDAGDRIFGTK.

Residues Arg79, Arg104, and Asp131–Ser139 each bind 5-phospho-alpha-D-ribose 1-diphosphate. Uracil is bound by residues Ile194 and Gly199 to Ala201. Residue Asp200 coordinates 5-phospho-alpha-D-ribose 1-diphosphate.

Belongs to the UPRTase family. Mg(2+) is required as a cofactor.

The enzyme catalyses UMP + diphosphate = 5-phospho-alpha-D-ribose 1-diphosphate + uracil. It functions in the pathway pyrimidine metabolism; UMP biosynthesis via salvage pathway; UMP from uracil: step 1/1. Its activity is regulated as follows. Allosterically activated by GTP. Its function is as follows. Catalyzes the conversion of uracil and 5-phospho-alpha-D-ribose 1-diphosphate (PRPP) to UMP and diphosphate. The protein is Uracil phosphoribosyltransferase of Lactobacillus delbrueckii subsp. bulgaricus (strain ATCC 11842 / DSM 20081 / BCRC 10696 / JCM 1002 / NBRC 13953 / NCIMB 11778 / NCTC 12712 / WDCM 00102 / Lb 14).